The chain runs to 199 residues: Recombination protein RecR (199 aa).

Residues 57-72 (CQSCRTFTEQDLCPIC) form a C4-type zinc finger. The region spanning 81-176 (GIICVVETPA…VISRIAHGVP (96 aa)) is the Toprim domain.

It belongs to the RecR family.

Its function is as follows. May play a role in DNA repair. It seems to be involved in an RecBC-independent recombinational process of DNA repair. It may act with RecF and RecO. The sequence is that of Recombination protein RecR from Shewanella frigidimarina (strain NCIMB 400).